The chain runs to 297 residues: Light-independent protochlorophyllide reductase iron-sulfur ATP-binding protein (297 aa).

Residues 41 to 46 and Lys-70 contribute to the ATP site; that span reads GIGKST. Ser-45 is a binding site for Mg(2+). Positions 126 and 160 each coordinate [4Fe-4S] cluster. ATP is bound by residues 211–212 and 235–237; these read NR and PDL.

It belongs to the NifH/BchL/ChlL family. In terms of assembly, homodimer. Protochlorophyllide reductase is composed of three subunits; BchL, BchN and BchB. [4Fe-4S] cluster serves as cofactor.

It catalyses the reaction chlorophyllide a + oxidized 2[4Fe-4S]-[ferredoxin] + 2 ADP + 2 phosphate = protochlorophyllide a + reduced 2[4Fe-4S]-[ferredoxin] + 2 ATP + 2 H2O. Its pathway is porphyrin-containing compound metabolism; bacteriochlorophyll biosynthesis (light-independent). In terms of biological role, component of the dark-operative protochlorophyllide reductase (DPOR) that uses Mg-ATP and reduced ferredoxin to reduce ring D of protochlorophyllide (Pchlide) to form chlorophyllide a (Chlide). This reaction is light-independent. The L component serves as a unique electron donor to the NB-component of the complex, and binds Mg-ATP. This is Light-independent protochlorophyllide reductase iron-sulfur ATP-binding protein from Methylobacterium radiotolerans (strain ATCC 27329 / DSM 1819 / JCM 2831 / NBRC 15690 / NCIMB 10815 / 0-1).